The sequence spans 620 residues: Dihydroxy-acid dehydratase (620 aa).

Position 81 (D81) interacts with Mg(2+). Residue C122 participates in [2Fe-2S] cluster binding. The Mg(2+) site is built by D123 and K124. At K124 the chain carries N6-carboxylysine. Residue C195 coordinates [2Fe-2S] cluster. E491 is a binding site for Mg(2+). The Proton acceptor role is filled by S517.

It belongs to the IlvD/Edd family. In terms of assembly, homodimer. It depends on [2Fe-2S] cluster as a cofactor. Mg(2+) serves as cofactor.

The enzyme catalyses (2R)-2,3-dihydroxy-3-methylbutanoate = 3-methyl-2-oxobutanoate + H2O. It carries out the reaction (2R,3R)-2,3-dihydroxy-3-methylpentanoate = (S)-3-methyl-2-oxopentanoate + H2O. It functions in the pathway amino-acid biosynthesis; L-isoleucine biosynthesis; L-isoleucine from 2-oxobutanoate: step 3/4. It participates in amino-acid biosynthesis; L-valine biosynthesis; L-valine from pyruvate: step 3/4. In terms of biological role, functions in the biosynthesis of branched-chain amino acids. Catalyzes the dehydration of (2R,3R)-2,3-dihydroxy-3-methylpentanoate (2,3-dihydroxy-3-methylvalerate) into 2-oxo-3-methylpentanoate (2-oxo-3-methylvalerate) and of (2R)-2,3-dihydroxy-3-methylbutanoate (2,3-dihydroxyisovalerate) into 2-oxo-3-methylbutanoate (2-oxoisovalerate), the penultimate precursor to L-isoleucine and L-valine, respectively. The chain is Dihydroxy-acid dehydratase from Colwellia psychrerythraea (strain 34H / ATCC BAA-681) (Vibrio psychroerythus).